The chain runs to 816 residues: Phosphatidylinositol 4-kinase beta (816 aa).

Disordered regions lie at residues Met-1–Leu-30, Glu-101–Arg-120, and Arg-250–Ser-318. Residue Gly-2 is modified to N-acetylglycine. The interaction with ACBD3 stretch occupies residues Gly-2–Ile-68. The segment covering Thr-10 to Leu-30 has biased composition (low complexity). The PIK helical domain occupies Cys-52–Ser-242. Ser-258 carries the post-translational modification Phosphoserine. Thr-263 is subject to Phosphothreonine. Phosphoserine is present on residues Ser-266, Ser-275, Ser-277, Ser-284, and Ser-294. 2 stretches are compositionally biased toward polar residues: residues Asp-278–Lys-297 and Ser-306–Ser-318. At Ser-428 the chain carries Phosphoserine. Thr-438 carries the phosphothreonine modification. A Phosphoserine modification is found at Ser-511. Phosphothreonine occurs at positions 517 and 519. Residues Glu-535–Thr-801 enclose the PI3K/PI4K catalytic domain. The segment at Val-541 to Gly-547 is G-loop. Positions Gln-668–Asn-676 are catalytic loop. The interval His-687–Thr-711 is activation loop.

Belongs to the PI3/PI4-kinase family. Type III PI4K subfamily. Interacts with ARF1 and ARF3 in the Golgi complex, but not with ARF4, ARF5 or ARF6. Interacts with NCS1/FREQ in a calcium-independent manner. Interacts with CALN1/CABP8 and CALN2/CABP7; in a calcium-dependent manner; this interaction competes with NCS1/FREQ binding. Interacts with ACBD3. Interacts with ARMH3, YWHAB, YWHAE, YWHAG, YWHAH, YWHAQ, YWHAZ and SFN. Interacts with GGA2 (via VHS domain); the interaction is important for PI4KB location at the Golgi apparatus membrane. Interacts with ATG9A. Mg(2+) serves as cofactor. It depends on Mn(2+) as a cofactor.

It localises to the endomembrane system. It is found in the mitochondrion outer membrane. The protein resides in the rough endoplasmic reticulum membrane. Its subcellular location is the golgi apparatus. The protein localises to the golgi apparatus membrane. It carries out the reaction a 1,2-diacyl-sn-glycero-3-phospho-(1D-myo-inositol) + ATP = a 1,2-diacyl-sn-glycero-3-phospho-(1D-myo-inositol 4-phosphate) + ADP + H(+). Inhibited by wortmannin. Increased kinase activity upon interaction with NCS1/FREQ. Functionally, phosphorylates phosphatidylinositol (PI) in the first committed step in the production of the second messenger inositol-1,4,5,-trisphosphate (PIP). May regulate Golgi disintegration/reorganization during mitosis, possibly via its phosphorylation. Involved in Golgi-to-plasma membrane trafficking. May play an important role in the inner ear development. The protein is Phosphatidylinositol 4-kinase beta (Pi4kb) of Mus musculus (Mouse).